Reading from the N-terminus, the 429-residue chain is Adenylosuccinate synthetase (429 aa).

Residues 12 to 18 and 40 to 42 contribute to the GTP site; these read GDEGKGK and GHT. Residue D13 is the Proton acceptor of the active site. Mg(2+) contacts are provided by D13 and G40. IMP-binding positions include 13-16, 38-41, T128, R142, Q223, T238, and R302; these read DEGK and NAGH. The active-site Proton donor is H41. Residue 298–304 coordinates substrate; it reads VNTGRPR. Residues R304, 330 to 332, and 412 to 414 each bind GTP; these read KLD and GVG.

The protein belongs to the adenylosuccinate synthetase family. In terms of assembly, homodimer. Mg(2+) serves as cofactor.

The protein localises to the cytoplasm. The catalysed reaction is IMP + L-aspartate + GTP = N(6)-(1,2-dicarboxyethyl)-AMP + GDP + phosphate + 2 H(+). The protein operates within purine metabolism; AMP biosynthesis via de novo pathway; AMP from IMP: step 1/2. In terms of biological role, plays an important role in the de novo pathway of purine nucleotide biosynthesis. Catalyzes the first committed step in the biosynthesis of AMP from IMP. The chain is Adenylosuccinate synthetase from Arthrobacter sp. (strain FB24).